The following is a 510-amino-acid chain: Sulfoquinovosyl transferase SQD2 (510 aa).

A chloroplast-targeting transit peptide spans 1-83; it reads MTTLSSINLS…SNDMTITQVR (83 aa). Residue S88 is modified to Phosphoserine. Residues 198 to 218 traverse the membrane as a helical segment; the sequence is PGVMVFGALAIAKMLSVPIVM.

This sequence belongs to the glycosyltransferase group 1 family. Glycosyltransferase 4 subfamily.

Its subcellular location is the plastid. It localises to the chloroplast membrane. The catalysed reaction is UDP-alpha-D-6-sulfoquinovose + a 1,2-diacyl-sn-glycerol = a 6-sulfo-alpha-D-quinovosyldiacylglycerol + UDP + H(+). Its pathway is glycolipid biosynthesis. Functionally, catalyzes the transfer of the sulfoquinovose moiety from UDP-sulfoquinovose to diacylglycerol during sulfolipid biosynthesis. Sulfolipid contributes to maintaining a negatively charged lipid-water interface, a requirement for proper function of photosynthetic membranes. Sulfolipid may also function as a substitute of anionic phospholipids under phosphate-limited growth conditions. The chain is Sulfoquinovosyl transferase SQD2 from Arabidopsis thaliana (Mouse-ear cress).